A 290-amino-acid chain; its full sequence is Elongation factor Ts (290 aa).

Positions 79 to 82 (TDFV) are involved in Mg(2+) ion dislocation from EF-Tu.

The protein belongs to the EF-Ts family.

It is found in the cytoplasm. Associates with the EF-Tu.GDP complex and induces the exchange of GDP to GTP. It remains bound to the aminoacyl-tRNA.EF-Tu.GTP complex up to the GTP hydrolysis stage on the ribosome. This Pseudoalteromonas atlantica (strain T6c / ATCC BAA-1087) protein is Elongation factor Ts.